We begin with the raw amino-acid sequence, 297 residues long: MKSKSSRTRVAILGSGSIGLDLMFKVKASEQFDLKFVVGRNANSDGLRLARSCNVETSSDGLDFLKAHEDAYDLVFDATSAAAHKVNNRFFSDAGKFVIDLTPAKVGRLCVPCINLDDMGAEQNVNLITCGGQASLPLAYALKQAVDEIDYLEVVSAIASRSAGIATRENIDEYMTTTEYALAKFSGAKKTKAILNINPAEPGVRMQTTLYAYARYRDFDRVRASVADMVEKVREYVPGYRLVVEPLESQGRITIGLTVRGRGDYLPEYAGNLDIINCAALAVASHRHATARLGATQ.

An NAD(+)-binding site is contributed by 15 to 18; the sequence is SGSI. Residue Cys130 is the Acyl-thioester intermediate of the active site. NAD(+)-binding positions include 162–170 and Asn272; that span reads SAGIATREN.

It belongs to the acetaldehyde dehydrogenase family.

The catalysed reaction is acetaldehyde + NAD(+) + CoA = acetyl-CoA + NADH + H(+). This Burkholderia pseudomallei (strain 1106a) protein is Acetaldehyde dehydrogenase.